We begin with the raw amino-acid sequence, 153 residues long: Zinc finger protein GIS2 (153 aa).

CCHC-type zinc fingers lie at residues 4–21 (KACY…DCDS), 23–40 (RLCY…DCTM), 47–64 (KQCY…ECTV), 65–82 (QRCF…ECPE), 92–109 (VSCY…DCMK), 116–133 (LKCY…DCQN), and 135–152 (RLCY…DCPK).

The protein resides in the cytoplasm. In terms of biological role, may act in the sexual differentiation pathway. The sequence is that of Zinc finger protein GIS2 (GIS2) from Saccharomyces cerevisiae (strain ATCC 204508 / S288c) (Baker's yeast).